The chain runs to 563 residues: Inositol-3-phosphate synthase 1-B (563 aa).

Belongs to the myo-inositol 1-phosphate synthase family. It depends on NAD(+) as a cofactor.

Its subcellular location is the cytoplasm. The catalysed reaction is D-glucose 6-phosphate = 1D-myo-inositol 3-phosphate. It functions in the pathway polyol metabolism; myo-inositol biosynthesis; myo-inositol from D-glucose 6-phosphate: step 1/2. Functionally, key enzyme in myo-inositol biosynthesis pathway that catalyzes the conversion of glucose 6-phosphate to 1-myo-inositol 1-phosphate in a NAD-dependent manner. Rate-limiting enzyme in the synthesis of all inositol-containing compounds. The polypeptide is Inositol-3-phosphate synthase 1-B (isyna1-b) (Xenopus laevis (African clawed frog)).